The following is a 103-amino-acid chain: Large ribosomal subunit protein bL21 (103 aa).

This sequence belongs to the bacterial ribosomal protein bL21 family. In terms of assembly, part of the 50S ribosomal subunit. Contacts protein L20.

Functionally, this protein binds to 23S rRNA in the presence of protein L20. This is Large ribosomal subunit protein bL21 from Pseudomonas paraeruginosa (strain DSM 24068 / PA7) (Pseudomonas aeruginosa (strain PA7)).